The primary structure comprises 274 residues: Mitochondrial S-adenosylmethionine carrier protein (274 aa).

Solcar repeat units follow at residues 4–77, 86–168, and 177–265; these read PGFT…VKSL, FKPV…LKAL, and VDSW…ARSL. The next 6 membrane-spanning stretches (helical) occupy residues 5-25, 49-69, 85-105, 142-162, 182-202, and 238-258; these read GFTASLVAGGVAGVSVDLILF, IYAGVPSAAVGSFPNAAAFFL, HFKPVKHMLAASTGEVVACLI, RGYKSTVLREIPFSLVQFPLW, SAVCGAFAGGFAAAVTTPLDV, and FAGVLPRMAAISMGGFIFLGA.

This sequence belongs to the mitochondrial carrier (TC 2.A.29) family.

It localises to the mitochondrion inner membrane. It catalyses the reaction S-adenosyl-L-homocysteine(out) + S-adenosyl-L-methionine(in) = S-adenosyl-L-homocysteine(in) + S-adenosyl-L-methionine(out). Its function is as follows. Mitochondrial S-adenosyl-L-methionine/S-adenosyl-L-homocysteine antiporter. Mediates the exchange of cytosolic S-adenosyl-L-methionine, the predominant methyl-group donor for macromolecule methylation processes, for mitochondrial S-adenosylhomocysteine(SAH), a by-product of methylation reactions. The sequence is that of Mitochondrial S-adenosylmethionine carrier protein from Mus musculus (Mouse).